Reading from the N-terminus, the 318-residue chain is Dimethyladenosine transferase (318 aa).

The S-adenosyl-L-methionine site is built by His37, Leu39, Gly64, Glu85, Asp113, and Asn128.

The protein belongs to the class I-like SAM-binding methyltransferase superfamily. rRNA adenine N(6)-methyltransferase family.

Its subcellular location is the cytoplasm. The protein localises to the nucleus. It localises to the nucleolus. It catalyses the reaction adenosine(1779)/adenosine(1780) in 18S rRNA + 4 S-adenosyl-L-methionine = N(6)-dimethyladenosine(1779)/N(6)-dimethyladenosine(1780) in 18S rRNA + 4 S-adenosyl-L-homocysteine + 4 H(+). Its function is as follows. Specifically dimethylates two adjacent adenosines in the loop of a conserved hairpin near the 3'-end of 18S rRNA in the 40S particle. The sequence is that of Dimethyladenosine transferase from Saccharomyces cerevisiae (strain ATCC 204508 / S288c) (Baker's yeast).